Reading from the N-terminus, the 1393-residue chain is DNA-directed RNA polymerase subunit beta (1393 aa).

The protein belongs to the RNA polymerase beta chain family. As to quaternary structure, the RNAP catalytic core consists of 2 alpha, 1 beta, 1 beta' and 1 omega subunit. When a sigma factor is associated with the core the holoenzyme is formed, which can initiate transcription.

The catalysed reaction is RNA(n) + a ribonucleoside 5'-triphosphate = RNA(n+1) + diphosphate. DNA-dependent RNA polymerase catalyzes the transcription of DNA into RNA using the four ribonucleoside triphosphates as substrates. The chain is DNA-directed RNA polymerase subunit beta from Rhodospirillum rubrum (strain ATCC 11170 / ATH 1.1.1 / DSM 467 / LMG 4362 / NCIMB 8255 / S1).